We begin with the raw amino-acid sequence, 173 residues long: Bifunctional protein PyrR (173 aa).

Residues 93 to 105 (VILVDDVLYTGRT) carry the PRPP-binding motif.

The protein belongs to the purine/pyrimidine phosphoribosyltransferase family. PyrR subfamily. As to quaternary structure, homodimer and homohexamer; in equilibrium.

It carries out the reaction UMP + diphosphate = 5-phospho-alpha-D-ribose 1-diphosphate + uracil. In terms of biological role, regulates transcriptional attenuation of the pyrimidine nucleotide (pyr) operon by binding in a uridine-dependent manner to specific sites on pyr mRNA. This disrupts an antiterminator hairpin in the RNA and favors formation of a downstream transcription terminator, leading to a reduced expression of downstream genes. Functionally, also displays a weak uracil phosphoribosyltransferase activity which is not physiologically significant. This chain is Bifunctional protein PyrR, found in Streptococcus uberis (strain ATCC BAA-854 / 0140J).